The following is a 1291-amino-acid chain: Histone-lysine N-methyltransferase SETDB1 (1291 aa).

A coiled-coil region spans residues 18-64 (ESEEIAELQQAVVEELGISMEELRHFIDEELEKMDCVQQRKKQLAEL). Residues 108–147 (RDSSSEDESSRPTEIIEIPDEDDDVLSIDSGDAGSRTPKD) form a disordered region. Phosphoserine occurs at positions 112 and 117. Position 120 is a phosphothreonine (Thr120). Positions 124 to 133 (EIPDEDDDVL) are enriched in acidic residues. A Glycyl lysine isopeptide (Lys-Gly) (interchain with G-Cter in SUMO2); alternate cross-link involves residue Lys182. A Glycyl lysine isopeptide (Lys-Gly) (interchain with G-Cter in ubiquitin); alternate cross-link involves residue Lys182. Tudor domains are found at residues 257 to 320 (KLYV…LKKT) and 347 to 403 (LLKS…SMKT). The interval 404-545 (SSASALEKKQ…APAPSALPAP (142 aa)) is disordered. Polar residues predominate over residues 433 to 444 (QYTQDLTGTGTQ). A compositionally biased stretch (pro residues) spans 448–468 (VEPPQPTAPPAPPFPPAPPLS). A compositionally biased stretch (polar residues) spans 477–515 (ESQLAQSRKQVAKKSTSFRPGSVGSGHSSPTSPALSENV). Positions 528 to 539 (SPLGSTASAPAP) are enriched in low complexity. Residues 594–665 (YRGKNPLLVP…EMFCLDPYVL (72 aa)) enclose the MBD domain. Residues 727–800 (VGCDCKDGCR…MCTNRLVQHG (74 aa)) enclose the Pre-SET domain. Cys729, Cys731, Cys735, Cys741, Cys743, Cys781, Cys785, Cys787, and Cys792 together coordinate Zn(2+). In terms of domain architecture, SET spans 803-1266 (VRLQLFKTQN…AGTELTWDYN (464 aa)). S-adenosyl-L-methionine-binding positions include 813 to 815 (KGW), Asp851, and Tyr853. Residue Lys867 forms a Glycyl lysine isopeptide (Lys-Gly) (interchain with G-Cter in ubiquitin) linkage. Residues 868–1160 (EGYESDAPCS…MTGPMKRQVA (293 aa)) form a disordered region. Residues 896-907 (EDPEESNDDSSD) show a composition bias toward acidic residues. A compositionally biased stretch (pro residues) spans 951–963 (DLGPPHIPVPPSI). Ser1025 carries the phosphoserine modification. Over residues 1031 to 1050 (IKDEGDIKQAKKEDTDDRNK) the composition is skewed to basic and acidic residues. A Glycyl lysine isopeptide (Lys-Gly) (interchain with G-Cter in SUMO2); alternate cross-link involves residue Lys1032. Lys1032 is covalently cross-linked (Glycyl lysine isopeptide (Lys-Gly) (interchain with G-Cter in SUMO1); alternate). Lys1038 participates in a covalent cross-link: Glycyl lysine isopeptide (Lys-Gly) (interchain with G-Cter in SUMO2). Residues 1052 to 1063 (SVVTESSRNYGY) are compositionally biased toward polar residues. Residue Ser1066 is modified to Phosphoserine. A Glycyl lysine isopeptide (Lys-Gly) (interchain with G-Cter in SUMO2) cross-link involves residue Lys1069. The segment covering 1100–1115 (LTLSSSTESEGESGTS) has biased composition (low complexity). The segment covering 1116-1140 (RKPTAGQTSATAVDSDDIQTISSGS) has biased composition (polar residues). Lys1149 is covalently cross-linked (Glycyl lysine isopeptide (Lys-Gly) (interchain with G-Cter in SUMO2)). Lys1170 and Lys1178 each carry N6,N6,N6-trimethyllysine; alternate. N6,N6-dimethyllysine; alternate occurs at positions 1170 and 1178. Residues Arg1220 and 1223–1224 (NH) contribute to the S-adenosyl-L-methionine site. Positions 1226, 1279, 1281, and 1286 each coordinate Zn(2+). Positions 1275–1291 (KELLCCCGAIECRGRLL) constitute a Post-SET domain.

This sequence belongs to the class V-like SAM-binding methyltransferase superfamily. Histone-lysine methyltransferase family. Suvar3-9 subfamily. As to quaternary structure, part of a complex containing at least CDYL, REST, WIZ, SETDB1, EHMT1 and EHMT2. Forms a complex with ATRX, TRIM28 and ZNF274. Probably part of a corepressor complex containing ZNF304, TRIM28, SETDB1 and DNMT1. Interacts with TRIM28/TIF1B. Interacts with ATF7IP and ATF7IP2; the interaction with ATF7IP protects SETDB1 from proteasomal degradation and is required to stimulate histone methyltransferase activity and facilitate the conversion of dimethylated to trimethylated H3 'Lys-9'. Interacts with CBX1 and CBX5. Interacts with DNMT3A and DNMT3B. Interacts with SUMO2. Interacts with MPHOSPH8. Interacts with ERG. Interacts with HDAC1, HDAC2, SIN3A and SIN3B. Interacts with ATRX. Interacts with RESF1. Interacts with ZNF638. Interacts with TASOR. Interacts with ZNF263; recruited to the SIX3 promoter along with other proteins involved in chromatin modification and transcriptional corepression where it contributes to transcriptional repression. Interacts with PHF13; the interaction probably enhances SETDB1 chromatin-associated levels and activity. Interacts with VRK1. In terms of processing, degraded by the proteasome, shielded by interaction with ATF7IP. Post-translationally, monoubiquitinated at Lys-867 by E2 enzymes of the UBE2E family. The conjugated-Ub is protected from deubiquitination by the SET domain. Monoubiquitination at Lys-867 is required for catalytic activity, H3K9 methylation and endogenous retrovirus silencing. Widely expressed. High expression in testis.

Its subcellular location is the nucleus. The protein resides in the cytoplasm. It is found in the chromosome. The enzyme catalyses N(6),N(6)-dimethyl-L-lysyl(9)-[histone H3] + S-adenosyl-L-methionine = N(6),N(6),N(6)-trimethyl-L-lysyl(9)-[histone H3] + S-adenosyl-L-homocysteine + H(+). Its function is as follows. Histone methyltransferase that specifically trimethylates 'Lys-9' of histone H3. H3 'Lys-9' trimethylation represents a specific tag for epigenetic transcriptional repression by recruiting HP1 (CBX1, CBX3 and/or CBX5) proteins to methylated histones. Mainly functions in euchromatin regions, thereby playing a central role in the silencing of euchromatic genes. H3 'Lys-9' trimethylation is coordinated with DNA methylation. Required for HUSH-mediated heterochromatin formation and gene silencing. Forms a complex with MBD1 and ATF7IP that represses transcription and couples DNA methylation and histone 'Lys-9' trimethylation. Its activity is dependent on MBD1 and is heritably maintained through DNA replication by being recruited by CAF-1. SETDB1 is targeted to histone H3 by TRIM28/TIF1B, a factor recruited by KRAB zinc-finger proteins. Probably forms a corepressor complex required for activated KRAS-mediated promoter hypermethylation and transcriptional silencing of tumor suppressor genes (TSGs) or other tumor-related genes in colorectal cancer (CRC) cells. Required to maintain a transcriptionally repressive state of genes in undifferentiated embryonic stem cells (ESCs). In ESCs, in collaboration with TRIM28, is also required for H3K9me3 and silencing of endogenous and introduced retroviruses in a DNA-methylation independent-pathway. Associates at promoter regions of tumor suppressor genes (TSGs) leading to their gene silencing. The SETDB1-TRIM28-ZNF274 complex may play a role in recruiting ATRX to the 3'-exons of zinc-finger coding genes with atypical chromatin signatures to establish or maintain/protect H3K9me3 at these transcriptionally active regions. This Homo sapiens (Human) protein is Histone-lysine N-methyltransferase SETDB1.